The primary structure comprises 371 residues: Chaperone protein DnaJ (371 aa).

The J domain maps to 5–69 (EFYDRLGVSK…QKRAAYDQYG (65 aa)). The segment at 127 to 209 (GAEKEVSYNR…CHGTGHEKKT (83 aa)) adopts a CR-type zinc-finger fold. Zn(2+)-binding residues include cysteine 140, cysteine 143, cysteine 157, cysteine 160, cysteine 183, cysteine 186, cysteine 197, and cysteine 200. CXXCXGXG motif repeat units lie at residues 140 to 147 (CHTCSGSG), 157 to 164 (CQKCHGSG), 183 to 190 (CDVCQGSG), and 197 to 204 (CPTCHGTG).

The protein belongs to the DnaJ family. In terms of assembly, homodimer. Requires Zn(2+) as cofactor.

It localises to the cytoplasm. Functionally, participates actively in the response to hyperosmotic and heat shock by preventing the aggregation of stress-denatured proteins and by disaggregating proteins, also in an autonomous, DnaK-independent fashion. Unfolded proteins bind initially to DnaJ; upon interaction with the DnaJ-bound protein, DnaK hydrolyzes its bound ATP, resulting in the formation of a stable complex. GrpE releases ADP from DnaK; ATP binding to DnaK triggers the release of the substrate protein, thus completing the reaction cycle. Several rounds of ATP-dependent interactions between DnaJ, DnaK and GrpE are required for fully efficient folding. Also involved, together with DnaK and GrpE, in the DNA replication of plasmids through activation of initiation proteins. The sequence is that of Chaperone protein DnaJ from Streptococcus agalactiae serotype Ia (strain ATCC 27591 / A909 / CDC SS700).